A 398-amino-acid polypeptide reads, in one-letter code: Methionine import ATP-binding protein MetN 2 (398 aa).

Residues 43 to 282 (VSLEQVGKVF…PRHGATRALL (240 aa)) enclose the ABC transporter domain. Position 79–86 (79–86 (GRSGAGKS)) interacts with ATP.

It belongs to the ABC transporter superfamily. Methionine importer (TC 3.A.1.24) family. As to quaternary structure, the complex is composed of two ATP-binding proteins (MetN), two transmembrane proteins (MetI) and a solute-binding protein (MetQ).

It localises to the cell inner membrane. It catalyses the reaction L-methionine(out) + ATP + H2O = L-methionine(in) + ADP + phosphate + H(+). The catalysed reaction is D-methionine(out) + ATP + H2O = D-methionine(in) + ADP + phosphate + H(+). Functionally, part of the ABC transporter complex MetNIQ involved in methionine import. Responsible for energy coupling to the transport system. This Burkholderia lata (strain ATCC 17760 / DSM 23089 / LMG 22485 / NCIMB 9086 / R18194 / 383) protein is Methionine import ATP-binding protein MetN 2.